The sequence spans 288 residues: Bifunctional protein FolD (288 aa).

NADP(+) contacts are provided by residues 168–170 (GRG), threonine 195, and valine 236.

It belongs to the tetrahydrofolate dehydrogenase/cyclohydrolase family. As to quaternary structure, homodimer.

The catalysed reaction is (6R)-5,10-methylene-5,6,7,8-tetrahydrofolate + NADP(+) = (6R)-5,10-methenyltetrahydrofolate + NADPH. It carries out the reaction (6R)-5,10-methenyltetrahydrofolate + H2O = (6R)-10-formyltetrahydrofolate + H(+). Its pathway is one-carbon metabolism; tetrahydrofolate interconversion. Catalyzes the oxidation of 5,10-methylenetetrahydrofolate to 5,10-methenyltetrahydrofolate and then the hydrolysis of 5,10-methenyltetrahydrofolate to 10-formyltetrahydrofolate. This Mycobacterium sp. (strain JLS) protein is Bifunctional protein FolD.